The following is a 1335-amino-acid chain: Xanthine dehydrogenase/oxidase (1335 aa).

Positions 7 to 94 constitute a 2Fe-2S ferredoxin-type domain; it reads DELVFFVNGK…HVAVTTVEGI (88 aa). Residues C46, C51, C54, C76, C115, C118, C150, and C152 each coordinate [2Fe-2S] cluster. The FAD-binding PCMH-type domain occupies 231 to 416; that stretch reads FEGERVTWIQ…VSIVIPYSRK (186 aa). FAD-binding positions include 259-266, F339, 349-353, D362, L406, and K424; these read LVVGNTEI and SIGGN. A disulfide bridge connects residues C538 and C995. Residues Q770 and F801 each coordinate Mo-molybdopterin. Residues E805 and R883 each contribute to the substrate site. R915 is a Mo-molybdopterin binding site. Positions 917 and 1013 each coordinate substrate. A1082 contacts Mo-molybdopterin. E1264 serves as the catalytic Proton acceptor.

It belongs to the xanthine dehydrogenase family. Homodimer. Interacts with BTN1A1. FAD is required as a cofactor. The cofactor is Mo-molybdopterin. Requires [2Fe-2S] cluster as cofactor. In terms of processing, subject to partial proteolysis; this alters the enzyme from the dehydrogenase form (D) to the oxidase form (O). Contains sulfhydryl groups that are easily oxidized (in vitro); this alters the enzyme from the dehydrogenase form (D) to the oxidase form (O).

It is found in the cytoplasm. The protein resides in the peroxisome. It localises to the secreted. The enzyme catalyses xanthine + NAD(+) + H2O = urate + NADH + H(+). The catalysed reaction is hypoxanthine + NAD(+) + H2O = xanthine + NADH + H(+). It carries out the reaction xanthine + O2 + H2O = urate + H2O2. Can be converted from the dehydrogenase form (D) to the oxidase form (O) irreversibly by proteolysis or reversibly through the oxidation of sulfhydryl groups. Key enzyme in purine degradation. Catalyzes the oxidation of hypoxanthine to xanthine. Catalyzes the oxidation of xanthine to uric acid. Contributes to the generation of reactive oxygen species. The chain is Xanthine dehydrogenase/oxidase (Xdh) from Mus musculus (Mouse).